The chain runs to 226 residues: UPF0173 metal-dependent hydrolase Fnod_0635 (226 aa).

Belongs to the UPF0173 family.

The sequence is that of UPF0173 metal-dependent hydrolase Fnod_0635 from Fervidobacterium nodosum (strain ATCC 35602 / DSM 5306 / Rt17-B1).